Reading from the N-terminus, the 165-residue chain is Fibrinogen-binding protein (165 aa).

Positions 1-29 (MKNKLIAKSLLAIAAIGITTTTIASTADA) are cleaved as a signal peptide.

In terms of assembly, interacts with host fibrinogen alpha chain/FGA. Interacts with host complement protein C3.

The protein localises to the secreted. Its function is as follows. Extracellular fibrinogen-binding protein that plays an important role in virulence. By interacting with the alpha chain of fibrinogen and its derivative fibrin, enhances a non-functional interaction between fibrinogen and platelets and is responsible for repression of fibrinogen-dependent platelet aggregation. In addition, assembles a fibrinogen protective shield around the bacteria which results in impaired phagocytic clearance by the host. Mechanistically, interacts with host complement C3b deposited on the surface of the bacterium via its C-terminal and then recruits fibrinogen via its N-terminal. The polypeptide is Fibrinogen-binding protein (fib) (Staphylococcus aureus (strain MRSA252)).